A 93-amino-acid chain; its full sequence is Pyrimidine/purine nucleoside phosphorylase (93 aa).

This sequence belongs to the nucleoside phosphorylase PpnP family.

It carries out the reaction a purine D-ribonucleoside + phosphate = a purine nucleobase + alpha-D-ribose 1-phosphate. It catalyses the reaction adenosine + phosphate = alpha-D-ribose 1-phosphate + adenine. The enzyme catalyses cytidine + phosphate = cytosine + alpha-D-ribose 1-phosphate. The catalysed reaction is guanosine + phosphate = alpha-D-ribose 1-phosphate + guanine. It carries out the reaction inosine + phosphate = alpha-D-ribose 1-phosphate + hypoxanthine. It catalyses the reaction thymidine + phosphate = 2-deoxy-alpha-D-ribose 1-phosphate + thymine. The enzyme catalyses uridine + phosphate = alpha-D-ribose 1-phosphate + uracil. The catalysed reaction is xanthosine + phosphate = alpha-D-ribose 1-phosphate + xanthine. In terms of biological role, catalyzes the phosphorolysis of diverse nucleosides, yielding D-ribose 1-phosphate and the respective free bases. Can use uridine, adenosine, guanosine, cytidine, thymidine, inosine and xanthosine as substrates. Also catalyzes the reverse reactions. The protein is Pyrimidine/purine nucleoside phosphorylase of Pseudomonas paraeruginosa (strain DSM 24068 / PA7) (Pseudomonas aeruginosa (strain PA7)).